A 261-amino-acid chain; its full sequence is Pre-mRNA-splicing factor SPP381 (261 aa).

2 disordered regions span residues 1–88 (MAIR…VFQR) and 205–229 (TTTTGEKDIPIKKSNRINNNKGDNE). Over residues 13–32 (SSESSSSDESVVDSTEISVD) the composition is skewed to low complexity. Residues 37–55 (DAVKPDNEESQLEGERDMA) show a composition bias toward basic and acidic residues. Residues 70-84 (SDSEDSSSEESDEEP) are compositionally biased toward acidic residues.

The protein belongs to the SPP381 family. Component of the 25S U4/U6.U5 tri-snRNP particle, a subcomplex of the spliceosome.

The protein localises to the nucleus. Its function is as follows. Component of the spliceosome and rRNA processing machinery. In association with the spliceosomal U4/U6.U5 tri-snRNP particle, required for splicing of pre-mRNA. This Vanderwaltozyma polyspora (strain ATCC 22028 / DSM 70294 / BCRC 21397 / CBS 2163 / NBRC 10782 / NRRL Y-8283 / UCD 57-17) (Kluyveromyces polysporus) protein is Pre-mRNA-splicing factor SPP381 (SPP381).